We begin with the raw amino-acid sequence, 305 residues long: UDP-3-O-acyl-N-acetylglucosamine deacetylase (305 aa).

Residues His78, His237, and Asp241 each coordinate Zn(2+). His264 acts as the Proton donor in catalysis.

It belongs to the LpxC family. Zn(2+) is required as a cofactor.

It carries out the reaction a UDP-3-O-[(3R)-3-hydroxyacyl]-N-acetyl-alpha-D-glucosamine + H2O = a UDP-3-O-[(3R)-3-hydroxyacyl]-alpha-D-glucosamine + acetate. It functions in the pathway glycolipid biosynthesis; lipid IV(A) biosynthesis; lipid IV(A) from (3R)-3-hydroxytetradecanoyl-[acyl-carrier-protein] and UDP-N-acetyl-alpha-D-glucosamine: step 2/6. In terms of biological role, catalyzes the hydrolysis of UDP-3-O-myristoyl-N-acetylglucosamine to form UDP-3-O-myristoylglucosamine and acetate, the committed step in lipid A biosynthesis. In Burkholderia cenocepacia (strain HI2424), this protein is UDP-3-O-acyl-N-acetylglucosamine deacetylase.